The chain runs to 212 residues: MKQLFRQWYDLSEIKKELTTRNWFPATSGNISIKVSHEPLTFLITASGKDKTKTTPDDFLLVDHVGVPVLETELRPSAETILHTHIYNNTNAGCVLHVHTTDNNVITNLYSDAVTLQNQEIIKALDIWEEGATIHIPIIENHAHIPTLGENFRKHIKGDSGAVLIRNHGITVWGRDSFDAKKRLEAYEFLFQFHIKLLSIQGGVSNGANSYS.

Zn(2+) contacts are provided by histidine 97 and histidine 99.

It belongs to the aldolase class II family. MtnB subfamily. As to quaternary structure, homotetramer. Requires Zn(2+) as cofactor.

The enzyme catalyses 5-(methylsulfanyl)-D-ribulose 1-phosphate = 5-methylsulfanyl-2,3-dioxopentyl phosphate + H2O. It functions in the pathway amino-acid biosynthesis; L-methionine biosynthesis via salvage pathway; L-methionine from S-methyl-5-thio-alpha-D-ribose 1-phosphate: step 2/6. Functionally, catalyzes the dehydration of methylthioribulose-1-phosphate (MTRu-1-P) into 2,3-diketo-5-methylthiopentyl-1-phosphate (DK-MTP-1-P). This is Methylthioribulose-1-phosphate dehydratase from Bacillus cereus (strain G9842).